We begin with the raw amino-acid sequence, 414 residues long: Multifunctional CCA protein (414 aa).

Residues glycine 8 and arginine 11 each coordinate ATP. Positions 8 and 11 each coordinate CTP. Aspartate 21 and aspartate 23 together coordinate Mg(2+). ATP is bound by residues arginine 91, arginine 143, and arginine 146. CTP-binding residues include arginine 91, arginine 143, and arginine 146. In terms of domain architecture, HD spans 232–333 (TGVHVMMVID…TRLVERCDAL (102 aa)).

It belongs to the tRNA nucleotidyltransferase/poly(A) polymerase family. Bacterial CCA-adding enzyme type 1 subfamily. In terms of assembly, monomer. Can also form homodimers and oligomers. Requires Mg(2+) as cofactor. The cofactor is Ni(2+).

The enzyme catalyses a tRNA precursor + 2 CTP + ATP = a tRNA with a 3' CCA end + 3 diphosphate. The catalysed reaction is a tRNA with a 3' CCA end + 2 CTP + ATP = a tRNA with a 3' CCACCA end + 3 diphosphate. Functionally, catalyzes the addition and repair of the essential 3'-terminal CCA sequence in tRNAs without using a nucleic acid template. Adds these three nucleotides in the order of C, C, and A to the tRNA nucleotide-73, using CTP and ATP as substrates and producing inorganic pyrophosphate. tRNA 3'-terminal CCA addition is required both for tRNA processing and repair. Also involved in tRNA surveillance by mediating tandem CCA addition to generate a CCACCA at the 3' terminus of unstable tRNAs. While stable tRNAs receive only 3'-terminal CCA, unstable tRNAs are marked with CCACCA and rapidly degraded. This Cupriavidus metallidurans (strain ATCC 43123 / DSM 2839 / NBRC 102507 / CH34) (Ralstonia metallidurans) protein is Multifunctional CCA protein.